Reading from the N-terminus, the 390-residue chain is Glucose-fructose oxidoreductase domain-containing protein 1 (390 aa).

Positions 1–21 (MLPGVGVFGTSLTARVIIPLL) are cleaved as a signal peptide.

Belongs to the Gfo/Idh/MocA family. Homodimer. Interacts with NKIRAS2.

Its subcellular location is the secreted. Probably catalytically inactive enzyme. Does not bind NAD or NADP. The sequence is that of Glucose-fructose oxidoreductase domain-containing protein 1 (Gfod1) from Mus musculus (Mouse).